Consider the following 357-residue polypeptide: Putative DNA directed RNA polymerase subunit R470 (357 aa).

It belongs to the archaeal Rpo11/eukaryotic RPB11/RPC19 RNA polymerase subunit family.

It localises to the virion. The catalysed reaction is RNA(n) + a ribonucleoside 5'-triphosphate = RNA(n+1) + diphosphate. The sequence is that of Putative DNA directed RNA polymerase subunit R470 from Acanthamoeba polyphaga mimivirus (APMV).